The primary structure comprises 283 residues: MELNFTKMEGLGNDFVMLDDRNGAIVQTVPYPVLAKKLCSRRFGVGGDGIIIIIDSETADVGFKIFNPDGSEPEMCGNGMRCFAKLVFEQGIVTKQRFTVETLAGTIIPEILLSDTRQVEAICVDMGEPILEPDRIPFKCNRQRAVNEQIQVKGETVSITAVSMGNPHAVIFVDDVKKIDLENLGRAIETHELFPAKTNVEFVTVLNDQELVMRVWERGAGETLACGTGASAVLVAASLNGLTRETALVHLAGGDLSIHWDQQSNHLFKTGPATHVFTGRIKI.

Substrate is bound by residues N13 and N67. C76 functions as the Proton donor in the catalytic mechanism. Substrate is bound by residues 77 to 78, N166, N199, and 217 to 218; these read GN and ER. The active-site Proton acceptor is C226. Position 227-228 (227-228) interacts with substrate; sequence GT.

It belongs to the diaminopimelate epimerase family. Homodimer.

It is found in the cytoplasm. It catalyses the reaction (2S,6S)-2,6-diaminopimelate = meso-2,6-diaminopimelate. It functions in the pathway amino-acid biosynthesis; L-lysine biosynthesis via DAP pathway; DL-2,6-diaminopimelate from LL-2,6-diaminopimelate: step 1/1. Functionally, catalyzes the stereoinversion of LL-2,6-diaminopimelate (L,L-DAP) to meso-diaminopimelate (meso-DAP), a precursor of L-lysine and an essential component of the bacterial peptidoglycan. This is Diaminopimelate epimerase from Desulforapulum autotrophicum (strain ATCC 43914 / DSM 3382 / VKM B-1955 / HRM2) (Desulfobacterium autotrophicum).